The sequence spans 373 residues: Erythronate-4-phosphate dehydrogenase (373 aa).

Substrate is bound by residues Ser45 and Thr67. NAD(+)-binding positions include Asp147, 207–209, and Asp233; that span reads ASR. Arg209 is a catalytic residue. Glu238 is an active-site residue. His255 serves as the catalytic Proton donor. Gly258 contacts NAD(+).

Belongs to the D-isomer specific 2-hydroxyacid dehydrogenase family. PdxB subfamily. As to quaternary structure, homodimer.

The protein localises to the cytoplasm. The enzyme catalyses 4-phospho-D-erythronate + NAD(+) = (R)-3-hydroxy-2-oxo-4-phosphooxybutanoate + NADH + H(+). It functions in the pathway cofactor biosynthesis; pyridoxine 5'-phosphate biosynthesis; pyridoxine 5'-phosphate from D-erythrose 4-phosphate: step 2/5. Its function is as follows. Catalyzes the oxidation of erythronate-4-phosphate to 3-hydroxy-2-oxo-4-phosphonooxybutanoate. This is Erythronate-4-phosphate dehydrogenase from Pseudoalteromonas translucida (strain TAC 125).